Reading from the N-terminus, the 215-residue chain is Holliday junction branch migration complex subunit RuvA (215 aa).

A domain I region spans residues 1–67 (MIGWLQGERI…DDGSTLFGFC (67 aa)). The tract at residues 68–146 (DQQERDLFRT…NWAPLQEPSL (79 aa)) is domain II. The segment at 147 to 158 (SLVDRSDVKAIP) is flexible linker. The tract at residues 159–215 (LGEPCLRDLQITLETLGYEDLEIRRAMRAVASGPDVPAEDDGDAWLRASLKWLSQSA) is domain III.

The protein belongs to the RuvA family. Homotetramer. Forms an RuvA(8)-RuvB(12)-Holliday junction (HJ) complex. HJ DNA is sandwiched between 2 RuvA tetramers; dsDNA enters through RuvA and exits via RuvB. An RuvB hexamer assembles on each DNA strand where it exits the tetramer. Each RuvB hexamer is contacted by two RuvA subunits (via domain III) on 2 adjacent RuvB subunits; this complex drives branch migration. In the full resolvosome a probable DNA-RuvA(4)-RuvB(12)-RuvC(2) complex forms which resolves the HJ.

The protein resides in the cytoplasm. Functionally, the RuvA-RuvB-RuvC complex processes Holliday junction (HJ) DNA during genetic recombination and DNA repair, while the RuvA-RuvB complex plays an important role in the rescue of blocked DNA replication forks via replication fork reversal (RFR). RuvA specifically binds to HJ cruciform DNA, conferring on it an open structure. The RuvB hexamer acts as an ATP-dependent pump, pulling dsDNA into and through the RuvAB complex. HJ branch migration allows RuvC to scan DNA until it finds its consensus sequence, where it cleaves and resolves the cruciform DNA. The protein is Holliday junction branch migration complex subunit RuvA of Synechococcus sp. (strain WH7803).